A 501-amino-acid polypeptide reads, in one-letter code: Probable cytosol aminopeptidase (501 aa).

Mn(2+) contacts are provided by lysine 267 and aspartate 272. Lysine 279 is an active-site residue. Mn(2+) is bound by residues aspartate 290, aspartate 349, and glutamate 351. Residue arginine 353 is part of the active site.

It belongs to the peptidase M17 family. Requires Mn(2+) as cofactor.

It localises to the cytoplasm. It catalyses the reaction Release of an N-terminal amino acid, Xaa-|-Yaa-, in which Xaa is preferably Leu, but may be other amino acids including Pro although not Arg or Lys, and Yaa may be Pro. Amino acid amides and methyl esters are also readily hydrolyzed, but rates on arylamides are exceedingly low.. The enzyme catalyses Release of an N-terminal amino acid, preferentially leucine, but not glutamic or aspartic acids.. In terms of biological role, presumably involved in the processing and regular turnover of intracellular proteins. Catalyzes the removal of unsubstituted N-terminal amino acids from various peptides. The polypeptide is Probable cytosol aminopeptidase (Desulfovibrio desulfuricans (strain ATCC 27774 / DSM 6949 / MB)).